We begin with the raw amino-acid sequence, 1110 residues long: MVSRKPALAVKELGCISDRDLRQLQRWNLRAATPATDQLMHEIIHQRALEFPEKIAVEAWNGTFTYQQLDRLASHLASCLASRGIGSNDFVPISFHKSRWAIVAMLAVNKSGAAFVPVDPSLPAGRVIHILRQTEARVALACDKRSTAMSEAGISVITVADSMDCEHLDKPLWSPSFPGHNAPAYCLFTSGSTGEPKGCVVGHAAFASIASHSQSAYIHSGSRVLQFASLGFGMGLFEVFCTLSTGATLCIPSDEDRMNCLAHAMTSMNVTWTILSPTTLSTLSPADMDCLVTVVTGGEPLSESQVTVWAPHVRLLQLYGLTECSGMFTVSDQIFSSDNPERNIGYPISGRCWIADPQDHHRLRAIGAVGELLIDTPNLAQNYLHNPAKTAAAFISPPGWIEDQLPARQSRPAVLYKTGDLARFNLDGSICHLGRKDHQLKVRGQRVEPGELEHHLRQLFPAVGDVVVDMACPVEANGVASLTAFILQENECSDDLFVEPTEAFLECVQSVRQSLTKIVPAYMIPNLFLRLGTMPKTVSGKKDRRRLRQEVGLLTWDRLRKYMTVDNARGRAAHTLETESEKILAQIWADLLHLDVGTLGPEDDILALGADSITAMRAVAMARIRGLGLTVSDIFATPTLAEMAQSARVVPTTAVTTHRSVSLVDDNVRELCLSHLREQTSLLDSDEQTPLILPATGMQKFFLDRSSFDYFAYILDGDVDFDRMQAACTTAVNQHSILRTVFVQNASGIFQVTLSSIPTALYHITTARNVADVSEKLWSPNTSKTVTLDHPATRFMLVSNPDAQQHALILRLSHSQYDGLSWPNLVGAIAATYNGSALSPCLQFSDYIRCRYQQDTTAGYNFWRRYLLGYTPTHMRDCTFEATTQSKAVSTDSDAVNVHHTIPSPPDTPDGITMATLIKAAGALVLGQLTRRPDIVIGQTVHGRSSLPLAGIETILGPCLNFVPIHVQIHPTWTAERFLHHVQDSHIQTTAYDYLELADIIEQSTSWAPGTSLGAIFHHQNIDTKMEISLQGMKNSKTIHHLTGSYIHQQMRSEVWVYSMPVDQGLEISIRGSSHVISAPQADELARKLGAFVQTLARHPEQALVNIMAP.

The tract at residues 47–443 (RALEFPEKIA…GRKDHQLKVR (397 aa)) is adenylation. One can recognise a Carrier domain in the interval 575-651 (TLETESEKIL…EMAQSARVVP (77 aa)). The residue at position 612 (Ser612) is an O-(pantetheine 4'-phosphoryl)serine. The tract at residues 713–1025 (YILDGDVDFD…IFHHQNIDTK (313 aa)) is condensation.

It belongs to the NRP synthetase family.

It functions in the pathway secondary metabolite biosynthesis. In terms of biological role, nonribisomal peptide synthetase; part of the gene cluster that mediates the biosynthesis of benzomalvin A and D. The pathway begins with the loading of amino acid precursors onto the A domains of the non ribosomal peptide synthetases benY and benZ. BenY and the A1 domain of benZ are loaded with anthranilate (Anth), while the A2 domain of benZ is loaded with phenylalanine (Phe). N-methylation of Phe by the methyltransferase benX may happen before loading of Phe onto benZ, after loading of Phe, or after dipeptide formation. Condensation of Anth with the secondary amine of NmPhe or Phe is catalyzed by the C1 domain of benZ, forming a dipeptide intermediate. This is followed by in trans condensation of the Anth-NmPhe dipeptide with Anth bound to the T domain of benY by the C2 domain of benZ to form the linear tripeptide Anth-NmPhe-Anth. Cyclization and release of the tripeptide is then catalyzed by the C-terminal C domain of benY and the resulting 11-member macrocyclic intermediate is expected to spontaneously collapse to form the benzodiazepine core. Benzomalvin A is in conformational equilibrium with its atropisomer, benzomalvin D. This chain is Nonribisomal peptide synthetase benY, found in Aspergillus terreus.